The sequence spans 718 residues: Kinesin-2a (718 aa).

In terms of domain architecture, Kinesin motor spans Asn5–Ile335. Gly97–Thr104 is a binding site for ATP. The ADP site is built by Gly100, Gly102, Lys103, Thr104, and Trp105. Thr104 contributes to the Mg(2+) binding site. Positions Ser432 to Gln477 form a coiled coil.

This sequence belongs to the TRAFAC class myosin-kinesin ATPase superfamily. Kinesin family. Kinesin II subfamily. In terms of assembly, monomer.

The protein resides in the cell projection. Its subcellular location is the cilium. It localises to the flagellum. It is found in the cytoplasm. The protein localises to the cytoskeleton. The protein resides in the flagellum axoneme. Its subcellular location is the flagellum basal body. In terms of biological role, involved in anterograde intraflagellar transport (IFT). Involved in flagellar assembly. This Giardia intestinalis (strain ATCC 50803 / WB clone C6) (Giardia lamblia) protein is Kinesin-2a.